Consider the following 141-residue polypeptide: Putative pre-16S rRNA nuclease (141 aa).

Belongs to the YqgF nuclease family.

The protein localises to the cytoplasm. In terms of biological role, could be a nuclease involved in processing of the 5'-end of pre-16S rRNA. This is Putative pre-16S rRNA nuclease from Aliivibrio fischeri (strain ATCC 700601 / ES114) (Vibrio fischeri).